The sequence spans 467 residues: Asparagine--tRNA ligase (467 aa).

This sequence belongs to the class-II aminoacyl-tRNA synthetase family. Homodimer.

It is found in the cytoplasm. The catalysed reaction is tRNA(Asn) + L-asparagine + ATP = L-asparaginyl-tRNA(Asn) + AMP + diphosphate + H(+). This chain is Asparagine--tRNA ligase, found in Actinobacillus pleuropneumoniae serotype 3 (strain JL03).